We begin with the raw amino-acid sequence, 334 residues long: L-lactate dehydrogenase B chain (334 aa).

At Ala2 the chain carries N-acetylalanine. Lys7 carries the post-translational modification N6-acetyllysine. NAD(+) is bound by residues 30 to 58 (GQVGMACAISILGKSLTDELALVDVLEDK) and Arg100. Ser44 carries the phosphoserine modification. Lys58 is subject to N6-acetyllysine. Arg107 is a substrate binding site. Lys119 carries the post-translational modification N6-acetyllysine. Asn139 provides a ligand contact to NAD(+). 2 residues coordinate substrate: Asn139 and Arg170. The active-site Proton acceptor is His194. Tyr240 carries the post-translational modification Phosphotyrosine. Substrate is bound at residue Thr249. At Lys329 the chain carries N6-acetyllysine.

It belongs to the LDH/MDH superfamily. LDH family. Homotetramer. Interacts with PTEN upstream reading frame protein MP31; the interaction leads to inhibition of mitochondrial lactate dehydrogenase activity, preventing conversion of lactate to pyruvate in mitochondria.

Its subcellular location is the cytoplasm. The protein resides in the mitochondrion inner membrane. The catalysed reaction is (S)-lactate + NAD(+) = pyruvate + NADH + H(+). It participates in fermentation; pyruvate fermentation to lactate; (S)-lactate from pyruvate: step 1/1. In terms of biological role, interconverts simultaneously and stereospecifically pyruvate and lactate with concomitant interconversion of NADH and NAD(+). The sequence is that of L-lactate dehydrogenase B chain (LDHB) from Sus scrofa (Pig).